The primary structure comprises 301 residues: Aquaporin-10 (301 aa).

At 1-22 (MVFTQAPAEIMGHLRIRSLLAR) the chain is on the cytoplasmic side. The chain crosses the membrane as a helical span at residues 23-41 (QCLAEFLGVFVLMLLTQGA). The Extracellular portion of the chain corresponds to 42–55 (VAQAVTSGETKGNF). Residues 56–75 (FTMFLAGSLAVTIAIYVGGN) form a helical membrane-spanning segment. Residues 76–77 (VS) lie on the Cytoplasmic side of the membrane. An intramembrane region (discontinuously helical) is located at residues 78–90 (GAHLNPAFSLAMC). Positions 82 to 84 (NPA) match the NPA 1 motif. The Cytoplasmic portion of the chain corresponds to 91–96 (IVGRLP). Residues 97–121 (WVKLPIYILVQLLSAFCASGATYVL) form a helical membrane-spanning segment. Residues 122-158 (YHDALQNYTGGNLTVTGPKETASIFATYPAPYLSLNN) lie on the Extracellular side of the membrane. N-linked (GlcNAc...) asparagine glycans are attached at residues asparagine 128 and asparagine 133. The helical transmembrane segment at 159 to 176 (GFLDQVLGTGMLIVGLLA) threads the bilayer. Residues 177–188 (ILDRRNKGVPAG) lie on the Cytoplasmic side of the membrane. A helical membrane pass occupies residues 189–205 (LEPVVVGMLILALGLSM). Residues 206 to 208 (GAN) lie on the Extracellular side of the membrane. The segment at residues 209–223 (CGIPLNPARDLGPRL) is an intramembrane region (discontinuously helical). The NPA 2 motif lies at 214 to 216 (NPA). At 224–241 (FTYVAGWGPEVFSAGNGW) the chain is on the extracellular side. Residues 242–262 (WWVPVVAPLVGATVGTATYQL) traverse the membrane as a helical segment. Over 263–301 (LVALHHPEGPEPAQDLVSAQHKASELETPASAQMLECKL) the chain is Cytoplasmic.

It belongs to the MIP/aquaporin (TC 1.A.8) family. As to quaternary structure, homotetramer; each monomer provides an independent glycerol/water pore. Post-translationally, N-glycosylation at Asn-133 increases the stability of the protein but has no effect on its activity. In terms of tissue distribution, detected in epithelial cells on villi in the ileum, and also in stomach, jejunum, colon, rectum, white adipose tissue and placenta (at protein level). Expressed in duodenum and jejunum. Highest expression in absorptive epithelial cells at the tips of villi in the jejunum. Detected in subcutaneous adipose tissue.

Its subcellular location is the apical cell membrane. It is found in the cell membrane. The protein localises to the lipid droplet. The enzyme catalyses glycerol(in) = glycerol(out). It carries out the reaction H2O(in) = H2O(out). It catalyses the reaction urea(in) = urea(out). Its activity is regulated as follows. Glycerol transport is regulated by pH, with the porin being permeable to glycerol at pH 5.5 but not at pH 7.4. Water permeability, however, is not influenced by pH. Aquaglyceroporins form homotetrameric transmembrane channels, with each monomer independently mediating glycerol and water transport across the plasma membrane along their osmotic gradient. Could also be permeable to urea. Among aquaglyceroporins, it exhibits a unique pH-gated glycerol transport activity, being more active at acidic pH. It most likely plays a central role in the efflux of glycerol formed during triglyceride hydrolysis in adipocytes and in glycerol uptake by enterocytes, as both processes occur and are stimulated at acidic pH. The protein is Aquaporin-10 of Homo sapiens (Human).